The following is a 420-amino-acid chain: Gamma-glutamyl phosphate reductase (420 aa).

Belongs to the gamma-glutamyl phosphate reductase family.

It localises to the cytoplasm. The catalysed reaction is L-glutamate 5-semialdehyde + phosphate + NADP(+) = L-glutamyl 5-phosphate + NADPH + H(+). It participates in amino-acid biosynthesis; L-proline biosynthesis; L-glutamate 5-semialdehyde from L-glutamate: step 2/2. In terms of biological role, catalyzes the NADPH-dependent reduction of L-glutamate 5-phosphate into L-glutamate 5-semialdehyde and phosphate. The product spontaneously undergoes cyclization to form 1-pyrroline-5-carboxylate. This Neisseria meningitidis serogroup B (strain ATCC BAA-335 / MC58) protein is Gamma-glutamyl phosphate reductase.